A 336-amino-acid polypeptide reads, in one-letter code: Pyridoxal 5'-phosphate synthase subunit PdxS (336 aa).

A D-ribose 5-phosphate-binding site is contributed by Asp33. Residue Lys90 is the Schiff-base intermediate with D-ribose 5-phosphate of the active site. Gly162 serves as a coordination point for D-ribose 5-phosphate. Residue Arg174 participates in D-glyceraldehyde 3-phosphate binding. Residues Gly260 and Gly281 to Ser282 contribute to the D-ribose 5-phosphate site.

Belongs to the PdxS/SNZ family. As to quaternary structure, in the presence of PdxT, forms a dodecamer of heterodimers.

The enzyme catalyses aldehydo-D-ribose 5-phosphate + D-glyceraldehyde 3-phosphate + L-glutamine = pyridoxal 5'-phosphate + L-glutamate + phosphate + 3 H2O + H(+). Its pathway is cofactor biosynthesis; pyridoxal 5'-phosphate biosynthesis. Functionally, catalyzes the formation of pyridoxal 5'-phosphate from ribose 5-phosphate (RBP), glyceraldehyde 3-phosphate (G3P) and ammonia. The ammonia is provided by the PdxT subunit. Can also use ribulose 5-phosphate and dihydroxyacetone phosphate as substrates, resulting from enzyme-catalyzed isomerization of RBP and G3P, respectively. In Picrophilus torridus (strain ATCC 700027 / DSM 9790 / JCM 10055 / NBRC 100828 / KAW 2/3), this protein is Pyridoxal 5'-phosphate synthase subunit PdxS.